Consider the following 91-residue polypeptide: Cell division topological specificity factor (91 aa).

Belongs to the MinE family.

Its function is as follows. Prevents the cell division inhibition by proteins MinC and MinD at internal division sites while permitting inhibition at polar sites. This ensures cell division at the proper site by restricting the formation of a division septum at the midpoint of the long axis of the cell. This Chloroflexus aurantiacus (strain ATCC 29366 / DSM 635 / J-10-fl) protein is Cell division topological specificity factor.